The sequence spans 394 residues: NAD(P)H-quinone oxidoreductase subunit H (394 aa).

This sequence belongs to the complex I 49 kDa subunit family. NDH-1 can be composed of about 15 different subunits; different subcomplexes with different compositions have been identified which probably have different functions.

It localises to the cellular thylakoid membrane. It catalyses the reaction a plastoquinone + NADH + (n+1) H(+)(in) = a plastoquinol + NAD(+) + n H(+)(out). The enzyme catalyses a plastoquinone + NADPH + (n+1) H(+)(in) = a plastoquinol + NADP(+) + n H(+)(out). NDH-1 shuttles electrons from an unknown electron donor, via FMN and iron-sulfur (Fe-S) centers, to quinones in the respiratory and/or the photosynthetic chain. The immediate electron acceptor for the enzyme in this species is believed to be plastoquinone. Couples the redox reaction to proton translocation, and thus conserves the redox energy in a proton gradient. Cyanobacterial NDH-1 also plays a role in inorganic carbon-concentration. This chain is NAD(P)H-quinone oxidoreductase subunit H, found in Synechococcus sp. (strain CC9605).